The following is a 149-amino-acid chain: Endoribonuclease YbeY (149 aa).

3 residues coordinate Zn(2+): H115, H119, and H125.

Belongs to the endoribonuclease YbeY family. Zn(2+) serves as cofactor.

The protein localises to the cytoplasm. Functionally, single strand-specific metallo-endoribonuclease involved in late-stage 70S ribosome quality control and in maturation of the 3' terminus of the 16S rRNA. This chain is Endoribonuclease YbeY, found in Mycoplasmopsis pulmonis (strain UAB CTIP) (Mycoplasma pulmonis).